The sequence spans 383 residues: Anhydro-N-acetylmuramic acid kinase (383 aa).

9 to 16 serves as a coordination point for ATP; it reads GTSLDGID.

It belongs to the anhydro-N-acetylmuramic acid kinase family.

It carries out the reaction 1,6-anhydro-N-acetyl-beta-muramate + ATP + H2O = N-acetyl-D-muramate 6-phosphate + ADP + H(+). It participates in amino-sugar metabolism; 1,6-anhydro-N-acetylmuramate degradation. The protein operates within cell wall biogenesis; peptidoglycan recycling. Its function is as follows. Catalyzes the specific phosphorylation of 1,6-anhydro-N-acetylmuramic acid (anhMurNAc) with the simultaneous cleavage of the 1,6-anhydro ring, generating MurNAc-6-P. Is required for the utilization of anhMurNAc either imported from the medium or derived from its own cell wall murein, and thus plays a role in cell wall recycling. The chain is Anhydro-N-acetylmuramic acid kinase from Clostridioides difficile (strain 630) (Peptoclostridium difficile).